Consider the following 472-residue polypeptide: Pyruvate kinase (472 aa).

R33 is a binding site for substrate. K(+) is bound by residues N35, S37, and D67. Residue 35–38 (NFSH) participates in ATP binding. R74 and K155 together coordinate ATP. A Mg(2+)-binding site is contributed by E220. Positions 243, 244, and 276 each coordinate substrate. D244 is a Mg(2+) binding site.

This sequence belongs to the pyruvate kinase family. As to quaternary structure, homotetramer. Mg(2+) is required as a cofactor. It depends on K(+) as a cofactor.

It carries out the reaction pyruvate + ATP = phosphoenolpyruvate + ADP + H(+). Its pathway is carbohydrate degradation; glycolysis; pyruvate from D-glyceraldehyde 3-phosphate: step 5/5. This chain is Pyruvate kinase (pyk), found in Mycobacterium intracellulare.